Consider the following 200-residue polypeptide: MGNHLTEMAPTTSFLPHFQALHVVVIGLDSAGKTSLLYRLKFKEFVQSIPTKGFNTEKIRVPLGGSRGITFQVWDVGGQEKLRPLWRSYTRRTDGLVFVVDAAEAERLEEAKVELHRISRASDNQGVPVLVLANKQDQPGALSAAEVEKRLAVRELATATLTHVQGCSAVDGLGLQPGLERLYEMILKRKKAARAGKKRR.

A lipid anchor (N-myristoyl glycine) is attached at Gly2. GTP contacts are provided by residues 27–34 (GLDSAGKT), 75–79 (DVGGQ), and 134–137 (NKQD).

The protein belongs to the small GTPase superfamily. Arf family. Interacts with CYTH2; the interaction is direct and ARL4D GTP-dependent. Does not interact with ARL4D.

Its subcellular location is the nucleus. The protein resides in the nucleolus. It is found in the cell membrane. It localises to the cytoplasm. Its function is as follows. Small GTP-binding protein which cycles between an inactive GDP-bound and an active GTP-bound form, and the rate of cycling is regulated by guanine nucleotide exchange factors (GEF) and GTPase-activating proteins (GAP). GTP-binding protein that does not act as an allosteric activator of the cholera toxin catalytic subunit. Recruits CYTH1, CYTH2, CYTH3 and CYTH4 to the plasma membrane in GDP-bound form. This is ADP-ribosylation factor-like protein 4D (ARL4D) from Bos taurus (Bovine).